Here is a 418-residue protein sequence, read N- to C-terminus: Cyclin-dependent kinase 15 (418 aa).

Residues 84 to 369 enclose the Protein kinase domain; it reads YLNLEKLGEG…AQDALLHPYF (286 aa). ATP contacts are provided by residues 90-98 and K113; that span reads LGEGTYATV. D205 functions as the Proton acceptor in the catalytic mechanism.

This sequence belongs to the protein kinase superfamily. CMGC Ser/Thr protein kinase family. CDC2/CDKX subfamily. Mg(2+) is required as a cofactor.

It catalyses the reaction L-seryl-[protein] + ATP = O-phospho-L-seryl-[protein] + ADP + H(+). The enzyme catalyses L-threonyl-[protein] + ATP = O-phospho-L-threonyl-[protein] + ADP + H(+). In terms of biological role, serine/threonine-protein kinase involved in the control of the eukaryotic cell cycle, whose activity is controlled by an associated cyclin. The chain is Cyclin-dependent kinase 15 (cdk15) from Danio rerio (Zebrafish).